We begin with the raw amino-acid sequence, 273 residues long: Putative phosphoenolpyruvate synthase regulatory protein (273 aa).

154–161 (GVSRSGKT) contacts ADP.

It belongs to the pyruvate, phosphate/water dikinase regulatory protein family. PSRP subfamily.

The enzyme catalyses [pyruvate, water dikinase] + ADP = [pyruvate, water dikinase]-phosphate + AMP + H(+). It catalyses the reaction [pyruvate, water dikinase]-phosphate + phosphate + H(+) = [pyruvate, water dikinase] + diphosphate. Bifunctional serine/threonine kinase and phosphorylase involved in the regulation of the phosphoenolpyruvate synthase (PEPS) by catalyzing its phosphorylation/dephosphorylation. In Neisseria meningitidis serogroup C (strain 053442), this protein is Putative phosphoenolpyruvate synthase regulatory protein.